The primary structure comprises 450 residues: UPF0210 protein CPF_1748 (450 aa).

Belongs to the UPF0210 family. In terms of assembly, homodimer.

The chain is UPF0210 protein CPF_1748 from Clostridium perfringens (strain ATCC 13124 / DSM 756 / JCM 1290 / NCIMB 6125 / NCTC 8237 / Type A).